Consider the following 874-residue polypeptide: Oxysterol-binding protein-related protein 5 (874 aa).

The tract at residues 1–71 (MKEEAFLRRR…PQTPGSATKV (71 aa)) is disordered. S12 carries the phosphoserine modification. Residues 93-123 (VSKKDALKAQKENYRQEKKRATKQLFSALTD) adopt a coiled-coil conformation. In terms of domain architecture, PH spans 126–243 (VVIMADSLKI…WLDALELALR (118 aa)). 2 disordered regions span residues 255-277 (QGRDGEQGSSPDASPSSLYGLPT) and 299-338 (FSDKSERENAEDSDAETQDHSRKTNESGSDLLDSPGGPWR). Residues 261 to 277 (QGSSPDASPSSLYGLPT) are compositionally biased toward polar residues. Basic and acidic residues predominate over residues 299-308 (FSDKSERENA). A 1,2-diacyl-sn-glycero-3-phospho-(1D-myo-inositol 4-phosphate) contacts are provided by residues 383-388 (LSRVVL), 445-448 (KPYN), and 477-478 (HH). Residues 383–388 (LSRVVL) and N448 contribute to the a 1,2-diacyl-sn-glycero-3-phospho-L-serine site. S503 lines the a 1,2-diacyl-sn-glycero-3-phospho-L-serine pocket. Residues 660–684 (GDQHKATQEKSVLEEAQRQRAREHQ) are compositionally biased toward basic and acidic residues. 2 disordered regions span residues 660–685 (GDQHKATQEKSVLEEAQRQRAREHQQ) and 739–798 (GQTT…GGES). A 1,2-diacyl-sn-glycero-3-phospho-(1D-myo-inositol 4-phosphate) contacts are provided by K669, E673, and R677. Residues S746 and S749 each carry the phosphoserine modification. Over residues 754–764 (PSSDRRLRKAS) the composition is skewed to basic and acidic residues. Over residues 765-782 (DQPSGHSQVTESSGSTPE) the composition is skewed to polar residues. Residues 855–873 (SWFLLCIFLTCQLFINYIL) traverse the membrane as a helical segment.

This sequence belongs to the OSBP family.

It is found in the endoplasmic reticulum membrane. Functionally, lipid transporter involved in lipid countertransport between the endoplasmic reticulum and the plasma membrane: specifically exchanges phosphatidylserine with phosphatidylinositol 4-phosphate (PI4P), delivering phosphatidylserine to the plasma membrane in exchange for PI4P, which is degraded by the SAC1/SACM1L phosphatase in the endoplasmic reticulum. Binds phosphatidylserine and PI4P in a mutually exclusive manner. May cooperate with NPC1 to mediate the exit of cholesterol from endosomes/lysosomes. Binds 25-hydroxycholesterol and cholesterol. This Mus musculus (Mouse) protein is Oxysterol-binding protein-related protein 5 (Osbpl5).